The following is a 172-amino-acid chain: AIG2-like protein B (172 aa).

15-20 (YGSFQE) contacts substrate. Residue E83 is the Proton acceptor of the active site. The segment covering 146–165 (KRNPQGKGRDDFSNVLKEED) has biased composition (basic and acidic residues). The tract at residues 146 to 172 (KRNPQGKGRDDFSNVLKEEDPANAPSS) is disordered.

It belongs to the gamma-glutamylcyclotransferase family. As to expression, expressed in flowerss, leaves, stems, seeds and roots.

The protein resides in the cell membrane. Functionally, putative gamma-glutamylcyclotransferase. The polypeptide is AIG2-like protein B (Arabidopsis thaliana (Mouse-ear cress)).